We begin with the raw amino-acid sequence, 87 residues long: uncharacterized protein (87 aa).

Residues 44–64 (DALYLAGSTIFTIVTTLVAWF) form a helical membrane-spanning segment.

Belongs to the SPP1 holin family.

It localises to the membrane. This is an uncharacterized protein from Bacillus licheniformis.